We begin with the raw amino-acid sequence, 141 residues long: Cystatin (141 aa).

Positions 1-26 (MVRSQLPVAAPLRLLCALLLLPSATM) are cleaved as a signal peptide. The Cystatin domain occupies 29–129 (GGLSPRSVTD…CHFQVWSRPW (101 aa)). The short motif at 73–77 (QVVSG) is the Secondary area of contact element. 2 cysteine pairs are disulfide-bonded: C91–C107 and C120–C140.

Belongs to the cystatin family. Expressed at a low level by the venom gland (at protein level).

It localises to the secreted. Its function is as follows. Inhibits various C1 cysteine proteases including cathepsin L, papain and cathepsin B. This protein has no toxic activity and its function in the venom is unknown. It may play a role as a housekeeping or regulatory protein. The protein is Cystatin of Micropechis ikaheca (New Guinean small-eyed snake).